A 370-amino-acid polypeptide reads, in one-letter code: 4-hydroxy-3-methylbut-2-en-1-yl diphosphate synthase (flavodoxin) (370 aa).

Cys-270, Cys-273, Cys-305, and Glu-312 together coordinate [4Fe-4S] cluster.

This sequence belongs to the IspG family. [4Fe-4S] cluster serves as cofactor.

It carries out the reaction (2E)-4-hydroxy-3-methylbut-2-enyl diphosphate + oxidized [flavodoxin] + H2O + 2 H(+) = 2-C-methyl-D-erythritol 2,4-cyclic diphosphate + reduced [flavodoxin]. It participates in isoprenoid biosynthesis; isopentenyl diphosphate biosynthesis via DXP pathway; isopentenyl diphosphate from 1-deoxy-D-xylulose 5-phosphate: step 5/6. Converts 2C-methyl-D-erythritol 2,4-cyclodiphosphate (ME-2,4cPP) into 1-hydroxy-2-methyl-2-(E)-butenyl 4-diphosphate. The chain is 4-hydroxy-3-methylbut-2-en-1-yl diphosphate synthase (flavodoxin) from Ectopseudomonas mendocina (strain ymp) (Pseudomonas mendocina).